Reading from the N-terminus, the 315-residue chain is piRNA biogenesis protein EXD1 (315 aa).

Residues 141-228 enclose the 3'-5' exonuclease domain; that stretch reads IYIFDIQVMQ…ECLTNYLGLQ (88 aa).

Belongs to the EXD1 family. Homodimer. Component of the PET complex, at least composed of EXD1, SIWI, TDRD12 and piRNAs.

It is found in the cytoplasm. Functionally, RNA-binding component of the PET complex, a multiprotein complex required for the processing of piRNAs during spermatogenesis. The piRNA metabolic process mediates the repression of transposable elements during meiosis by forming complexes composed of piRNAs and Piwi proteins and governs the methylation and subsequent repression of transposable elements, preventing their mobilization, which is essential for the germline integrity. The PET complex is required during the secondary piRNAs metabolic process for the PIWIL2 slicing-triggered loading of PIWIL4 piRNAs. In the PET complex, EXD1 probably acts as an RNA adapter. EXD1 is an inactive exonuclease. This chain is piRNA biogenesis protein EXD1, found in Bombyx mori (Silk moth).